The following is a 506-amino-acid chain: Dipeptide and tripeptide permease A (506 aa).

The Cytoplasmic portion of the chain corresponds to 1–36 (MSTANNNSEHPESVSLNAFKQPKAFYLIFSIELWER). Residues 37–57 (FGYYGLQGIMAVYLVKMLGLS) form a helical membrane-spanning segment. The Periplasmic segment spans residues 58–61 (EADS). Residues 62–82 (ITLFSSFSALVYGFVAIGGWL) form a helical membrane-spanning segment. At 83-91 (GDKVLGSKR) the chain is on the cytoplasmic side. The next 2 helical transmembrane spans lie at 92–112 (VIVLGALVLAVGYAMVAYSGH) and 113–133 (EIFWVYLGMATIAVGSGLFKA). Residues 134 to 155 (NPSSLLSTCYEKDDPRLDGAFT) are Cytoplasmic-facing. Residues 156-176 (MYYMSVNIGSFLSMLATPWLA) traverse the membrane as a helical segment. The Periplasmic segment spans residues 177–180 (AKYG). The chain crosses the membrane as a helical span at residues 181-201 (WSVAFSLSVVGMLITLVNFMV). Topologically, residues 202–222 (CHKWVKQHGSKPDFKPLQVKK) are cytoplasmic. A helical membrane pass occupies residues 223–243 (LLMVLVGVVALVALSSWLLHN). Over 244-248 (QIIAR) the chain is Periplasmic. The chain crosses the membrane as a helical span at residues 249–269 (WALAIVSIGIVIVFAKETFAL). The Cytoplasmic portion of the chain corresponds to 270–276 (HGAARRK). Residues 277-297 (MIVAFLLMLEAVVFFVLYSQM) form a helical membrane-spanning segment. Residues 298 to 322 (PTSLNFFAIHNVEHNILGLAFEPEQ) lie on the Periplasmic side of the membrane. Residues 323 to 343 (YQALNPFWIMLASPILAALYN) traverse the membrane as a helical segment. Topologically, residues 344–354 (KMGDRLPMPHK) are cytoplasmic. The chain crosses the membrane as a helical span at residues 355 to 375 (FAFGMILCSGAFLVLPWGASF). At 376–385 (ANEQGIVSVN) the chain is on the periplasmic side. Residues 386-406 (WLILSYALQSIGELMISGLGL) traverse the membrane as a helical segment. The Cytoplasmic portion of the chain corresponds to 407–416 (AMVAQLVPQR). The chain crosses the membrane as a helical span at residues 417-437 (LMGFIMGSWFLTTAAAALIAG). Residues 438 to 461 (KVAGLTAVPGDVNDAHASLAIYSH) lie on the Periplasmic side of the membrane. The helical transmembrane segment at 462-482 (VFMQIGIATAVIAILMMLTAP) threads the bilayer. The Cytoplasmic portion of the chain corresponds to 483–506 (KLHRMTLDTAEDTEKKAQAAAITN).

The protein belongs to the major facilitator superfamily. Proton-dependent oligopeptide transporter (POT/PTR) (TC 2.A.17) family. DtpA subfamily.

The protein localises to the cell inner membrane. Its function is as follows. Proton-dependent permease that transports di- and tripeptides. The polypeptide is Dipeptide and tripeptide permease A (Serratia proteamaculans (strain 568)).